Reading from the N-terminus, the 399-residue chain is Elongation factor Tu (399 aa).

The 200-residue stretch at 10–209 (KPHVNIGTIG…AVDSYIPTPV (200 aa)) folds into the tr-type G domain. Residues 19-26 (GHVDHGKT) form a G1 region. 19–26 (GHVDHGKT) contributes to the GTP binding site. A Mg(2+)-binding site is contributed by Thr-26. Residues 60–64 (GITIA) are G2. A G3 region spans residues 81–84 (DCPG). GTP-binding positions include 81–85 (DCPGH) and 136–139 (NKAD). The tract at residues 136-139 (NKAD) is G4. The G5 stretch occupies residues 174–176 (SAL).

This sequence belongs to the TRAFAC class translation factor GTPase superfamily. Classic translation factor GTPase family. EF-Tu/EF-1A subfamily. Monomer.

It localises to the cytoplasm. It carries out the reaction GTP + H2O = GDP + phosphate + H(+). GTP hydrolase that promotes the GTP-dependent binding of aminoacyl-tRNA to the A-site of ribosomes during protein biosynthesis. The sequence is that of Elongation factor Tu from Campylobacter concisus (strain 13826).